The following is a 364-amino-acid chain: MFLCVIIPCLCSYLCSLFSWLLGQIPSFLFDKINESWLTSTKRNVEIVKNLMDKISQLPDELLVKVLSFLSTKDAVSTSILSMRWKSLWMWLPKLEYNFRHYSVSEGQGLARFITSSLRVHKAPAIESLSLKFRYGAIGSIKPKDIYLWVSLAVHVSNVRELSLKLFNFAELPTKLPKSLCKCKSIVILKLKDEILVDVPRKVCLPSLKTLFLGRVTYSDANSLHRLLSNCPVLEDLVMERDKIDNLGKLSVIVKSLQRLTLKMSRPCHLDGLKMNSPSLKYLKVIDERLESDSDDESDSDSPRYFYDFEDMPKLEEADFVLTFQNIKKFFGSITSVKRLSLCLGVYTEEVICFHHSIHLIVEQ.

Residues 52-98 (MDKISQLPDELLVKVLSFLSTKDAVSTSILSMRWKSLWMWLPKLEYN) enclose the F-box domain. LRR repeat units lie at residues 158-179 (NVRE…LPKS), 185-206 (SIVI…VCLP), 207-228 (SLKT…HRLL), 233-254 (VLED…SVIV), 256-277 (SLQR…KMNS), and 279-300 (SLKY…ESDS).

In Arabidopsis thaliana (Mouse-ear cress), this protein is F-box/LRR-repeat protein At1g55660.